The following is a 760-amino-acid chain: Anti-sigma-I factor RsgI6 (760 aa).

Topologically, residues 1-55 (MIVGKVLDMDEKTAIIMTDDFAFLNVVRTSEMAVGKKVKVLDSDIIKPKNSLRRY) are cytoplasmic. Residues 2–49 (IVGKVLDMDEKTAIIMTDDFAFLNVVRTSEMAVGKKVKVLDSDIIKPK) enclose the RsgI N-terminal anti-sigma domain. Residues 56-76 (LPVAAVAACFVIVLSFVLMFI) form a helical membrane-spanning segment. Topologically, residues 77–760 (NGNTARKNIY…GTLQTTYRIP (684 aa)) are extracellular. The interval 274–352 (AINTGPAESA…STPKPVSPVQ (79 aa)) is disordered. Residues 291-352 (LPATSTPGRT…STPKPVSPVQ (62 aa)) show a composition bias toward polar residues. Positions 402-701 (DSSNKPIENA…NEAGRRFESL (300 aa)) constitute a GH10 domain. Glu538 (proton donor) is an active-site residue. Residue Glu635 is the Nucleophile of the active site.

In the C-terminal section; belongs to the glycosyl hydrolase 10 (cellulase F) family. In terms of assembly, interacts (via RsgI N-terminal anti-sigma domain) with SigI6.

The protein localises to the cell membrane. It carries out the reaction Endohydrolysis of (1-&gt;4)-beta-D-xylosidic linkages in xylans.. The protein operates within glycan degradation; xylan degradation. Its function is as follows. Anti-sigma factor for SigI6. Negatively regulates SigI6 activity through direct interaction. Binding of the polysaccharide substrate to the extracellular C-terminal sensing domain of RsgI6 may induce a conformational change in its N-terminal cytoplasmic region, leading to the release and activation of SigI6. Binds to and hydrolyzes insoluble and soluble xylan substrates. Has low enzymatic activity. The polypeptide is Anti-sigma-I factor RsgI6 (Acetivibrio thermocellus (strain ATCC 27405 / DSM 1237 / JCM 9322 / NBRC 103400 / NCIMB 10682 / NRRL B-4536 / VPI 7372) (Clostridium thermocellum)).